The chain runs to 118 residues: Ribosome-binding factor A (118 aa).

This sequence belongs to the RbfA family. Monomer. Binds 30S ribosomal subunits, but not 50S ribosomal subunits or 70S ribosomes.

The protein localises to the cytoplasm. In terms of biological role, one of several proteins that assist in the late maturation steps of the functional core of the 30S ribosomal subunit. Associates with free 30S ribosomal subunits (but not with 30S subunits that are part of 70S ribosomes or polysomes). Required for efficient processing of 16S rRNA. May interact with the 5'-terminal helix region of 16S rRNA. In Dehalococcoides mccartyi (strain ATCC BAA-2266 / KCTC 15142 / 195) (Dehalococcoides ethenogenes (strain 195)), this protein is Ribosome-binding factor A.